The primary structure comprises 394 residues: Elongation factor Tu (394 aa).

The tr-type G domain occupies lysine 10 to glutamate 204. A G1 region spans residues glycine 19–threonine 26. Glycine 19–threonine 26 serves as a coordination point for GTP. Threonine 26 serves as a coordination point for Mg(2+). The interval glycine 60–asparagine 64 is G2. Positions aspartate 81–glycine 84 are G3. Residues aspartate 81 to histidine 85 and asparagine 136 to aspartate 139 each bind GTP. Positions asparagine 136–aspartate 139 are G4. The interval serine 174 to leucine 176 is G5.

This sequence belongs to the TRAFAC class translation factor GTPase superfamily. Classic translation factor GTPase family. EF-Tu/EF-1A subfamily. As to quaternary structure, monomer.

The protein resides in the cytoplasm. It catalyses the reaction GTP + H2O = GDP + phosphate + H(+). Functionally, GTP hydrolase that promotes the GTP-dependent binding of aminoacyl-tRNA to the A-site of ribosomes during protein biosynthesis. In Neisseria gonorrhoeae (strain ATCC 700825 / FA 1090), this protein is Elongation factor Tu.